A 164-amino-acid chain; its full sequence is Protein SprT (164 aa).

One can recognise a SprT-like domain in the interval 12–157; that stretch reads CFLQAESFFK…CRRCRQTLVF (146 aa). Histidine 69 provides a ligand contact to Zn(2+). Glutamate 70 is an active-site residue. Histidine 73 contacts Zn(2+).

It belongs to the SprT family. Zn(2+) is required as a cofactor.

Its subcellular location is the cytoplasm. This Pseudomonas fluorescens (strain SBW25) protein is Protein SprT.